Reading from the N-terminus, the 430-residue chain is Purine nucleoside phosphorylase LACC1 (430 aa).

Lysine 247 bears the N6-acetyllysine mark. Histidine 250, cysteine 284, and histidine 301 together coordinate Zn(2+).

This sequence belongs to the purine nucleoside phosphorylase YfiH/LACC1 family. Interacts with FASN. Interacts with SDHA. Interacts with ATF6, EIF2AK3 and ERN1. Post-translationally, phosphorylated on tyrosine residues. Predominantly expressed in myeloid cells. Highly expressed in primary macrophages and dendritic cells sorted from the peritoneum or spleen, respectively (at protein level).

The protein localises to the cytoplasm. It is found in the nucleus. It localises to the endoplasmic reticulum. Its subcellular location is the peroxisome. It carries out the reaction adenosine + phosphate = alpha-D-ribose 1-phosphate + adenine. The catalysed reaction is inosine + phosphate = alpha-D-ribose 1-phosphate + hypoxanthine. It catalyses the reaction guanosine + phosphate = alpha-D-ribose 1-phosphate + guanine. The enzyme catalyses S-methyl-5'-thioadenosine + phosphate = 5-(methylsulfanyl)-alpha-D-ribose 1-phosphate + adenine. It carries out the reaction adenosine + H2O + H(+) = inosine + NH4(+). In terms of biological role, purine nucleoside enzyme that catalyzes the phosphorolysis of adenosine, guanosine and inosine nucleosides, yielding D-ribose 1-phosphate and the respective free bases, adenine, guanine and hypoxanthine. Also catalyzes the phosphorolysis of S-methyl-5'-thioadenosine into adenine and S-methyl-5-thio-alpha-D-ribose 1-phosphate. Also has adenosine deaminase activity. Acts as a regulator of innate immunity in macrophages by modulating the purine nucleotide metabolism, thereby regulating the metabolic function and bioenergetic state of macrophages. Enables a purine nucleotide cycle between adenosine and inosine monophosphate and adenylosuccinate that prevents cytoplasmic acidification and balances the cytoplasmic-mitochondrial redox interface. The purine nucleotide cycle consumes aspartate and releases fumarate in a manner involving fatty acid oxidation and ATP-citrate lyase activity. Participates in pattern recognition receptor-induced cytokines in macrophages: associates with the NOD2-signaling complex and promotes optimal NOD2-induced signaling, cytokine secretion and bacterial clearance. Localizes to the endoplasmic reticulum upon PRR stimulation of macrophages and associates with endoplasmic reticulum-stress sensors, promoting the endoplasmic reticulum unfolded protein response (UPR). Does not show laccase activity. In Mus musculus (Mouse), this protein is Purine nucleoside phosphorylase LACC1.